A 182-amino-acid chain; its full sequence is Peptidyl-prolyl cis-trans isomerase H (182 aa).

Residues 15–181 (FFDITLGGEP…LDVVIAQCGE (167 aa)) form the PPIase cyclophilin-type domain.

Belongs to the cyclophilin-type PPIase family. PPIase H subfamily.

The protein localises to the nucleus. It carries out the reaction [protein]-peptidylproline (omega=180) = [protein]-peptidylproline (omega=0). Its function is as follows. PPIases accelerate the folding of proteins. It catalyzes the cis-trans isomerization of proline imidic peptide bonds in oligopeptides. This chain is Peptidyl-prolyl cis-trans isomerase H (cyp-3), found in Neurospora crassa (strain ATCC 24698 / 74-OR23-1A / CBS 708.71 / DSM 1257 / FGSC 987).